Here is a 352-residue protein sequence, read N- to C-terminus: MEDVVIAGIAGKLPESENLQEFWEKLLNGVDMVTEDDRRWKPGMYGLPKRNGKLKDISKFDASFFGVHPKQAHTMDPQLRLLLEVSYEAILDGGINPATLRGTDTGVWVGASGSEAGEAFSQDPEQLLGYSMIGCQRAMFANRISYFYDFKGPSLSIDTACSSSLMALENAYKAIRNGRCSAAVVGGVNLLLKPNTSVQFMKLGMLSPDGACKVFDASGDGYCRSEAVVVVLLTKKSMAKRIYATIVNAGSNTDGFKEQGVTFPSGDMQRQLVSSLHRECGIKPGDIEYVETHGTGTKVGDPQEVNGLADLFCQCEREPLLIGSTKSNMGHPEPASGLAALAKVVLSLEHGL.

Residues 1 to 352 (MEDVVIAGIA…KVVLSLEHGL (352 aa)) form the Ketosynthase family 3 (KS3) domain. Catalysis depends on for beta-ketoacyl synthase activity residues cysteine 161, histidine 293, and histidine 331.

As to quaternary structure, homodimer which monomers are arranged in a head to tail fashion.

The catalysed reaction is acetyl-CoA + n malonyl-CoA + 2n NADPH + 2n H(+) = a long-chain fatty acid + (n+1) CoA + n CO2 + 2n NADP(+).. Fatty acid synthetase catalyzes the formation of long-chain fatty acids from acetyl-CoA, malonyl-CoA and NADPH. This multifunctional protein has 7 catalytic activities as an acyl carrier protein. In Anser anser anser (Western greylag goose), this protein is Fatty acid synthase (FASN).